Here is a 399-residue protein sequence, read N- to C-terminus: Coenzyme A biosynthesis bifunctional protein CoaBC (399 aa).

A phosphopantothenoylcysteine decarboxylase region spans residues Met-1–Ser-190. The active-site Proton donor is the Cys-159. Residues Ile-191–Met-399 are phosphopantothenate--cysteine ligase. Residues Asp-279, Lys-289, Pro-307–Val-310, Phe-326, Lys-340, and Lys-344 each bind CTP.

It in the N-terminal section; belongs to the HFCD (homo-oligomeric flavin containing Cys decarboxylase) superfamily. This sequence in the C-terminal section; belongs to the PPC synthetase family. Mg(2+) serves as cofactor. Requires FMN as cofactor.

It catalyses the reaction N-[(R)-4-phosphopantothenoyl]-L-cysteine + H(+) = (R)-4'-phosphopantetheine + CO2. It carries out the reaction (R)-4'-phosphopantothenate + L-cysteine + CTP = N-[(R)-4-phosphopantothenoyl]-L-cysteine + CMP + diphosphate + H(+). The protein operates within cofactor biosynthesis; coenzyme A biosynthesis; CoA from (R)-pantothenate: step 2/5. It participates in cofactor biosynthesis; coenzyme A biosynthesis; CoA from (R)-pantothenate: step 3/5. Its function is as follows. Catalyzes two sequential steps in the biosynthesis of coenzyme A. In the first step cysteine is conjugated to 4'-phosphopantothenate to form 4-phosphopantothenoylcysteine. In the second step the latter compound is decarboxylated to form 4'-phosphopantotheine. The sequence is that of Coenzyme A biosynthesis bifunctional protein CoaBC from Vibrio parahaemolyticus serotype O3:K6 (strain RIMD 2210633).